We begin with the raw amino-acid sequence, 443 residues long: FLYWCH-type zinc finger-containing protein peb-1 (443 aa).

The interval 22-49 is disordered; that stretch reads KPGSSDISSSSTDTSAISPISVSSMPLS. Positions 25 to 42 are enriched in low complexity; sequence SSDISSSSTDTSAISPIS. The required for DNA-binding DNA-binding region spans 46–203; that stretch reads MPLSPDKEKK…RNKDGKPKKP (158 aa). Residues 69–135 form an FLYWCH-type zinc finger; it reads IVTSFKGYQK…NACTKGSHNH (67 aa). Residues 251 to 271 form a disordered region; it reads PTIQIPQPIPTPIQHQQQEQS.

It localises to the nucleus. In terms of biological role, putative transcription factor. Binds to specific sequence motif 5'-[TC][AGT]TGCC[GA][AT]-3' in regulatory elements of target genes such as myosin myo-2. May modulate gene expression, perhaps acting in opposition to transcription factor pha-4. Involved in morphogenesis, perhaps especially in formation of the pharynx. Plays roles in molting, feeding and morphology. The sequence is that of FLYWCH-type zinc finger-containing protein peb-1 from Caenorhabditis elegans.